The sequence spans 873 residues: Rho GTPase-activating protein gacJJ (873 aa).

Residues 64–147 (DEPSSINTSS…NVNNSSNAPT (84 aa)) are disordered. The span at 66-91 (PSSINTSSGNIGSNNNSSSNTPLTGS) shows a compositional bias: low complexity. A compositionally biased stretch (gly residues) spans 103-112 (IGGGGGGGDN). Residues 113–144 (GITNSGNIGSSSNSDLKKSTSSGIVNVNNSSN) are compositionally biased toward low complexity. Residues 301–402 (NPVREGYLKK…WTVLPIVIES (102 aa)) form the PH domain. The Rho-GAP domain occupies 428-621 (VPIEKTVSGN…SLIRDYQYIF (194 aa)). In terms of domain architecture, SH3 spans 628-694 (EQKILAKSLY…PASYVELLPH (67 aa)). Residues 715-761 (MLEMESTKTKNQEIDKNIKQLEITKKELESTINDLENEKAALENDPT) adopt a coiled-coil conformation.

The protein localises to the cytoplasm. Functionally, rho GTPase-activating protein involved in the signal transduction pathway. In Dictyostelium discoideum (Social amoeba), this protein is Rho GTPase-activating protein gacJJ (gacJJ).